A 928-amino-acid polypeptide reads, in one-letter code: Periplasmic nitrate reductase (928 aa).

The segment at residues 1 to 33 (MAFSRREFLKSAAAASAASAVGMSVPSQLLAQA) is a signal peptide (tat-type signal). Residues 40–96 (WRWDKSVCRFCGTGCGIMVATKNDQIVAVKGDPAAPVNRGLNCIKGYFNAKIMYGAD) enclose the 4Fe-4S Mo/W bis-MGD-type domain. The [4Fe-4S] cluster site is built by C47, C50, C54, and C82. Mo-bis(molybdopterin guanine dinucleotide) contacts are provided by residues K84, Q152, N177, C181, 214–221 (WGANMAEM), 265–267 (QTD), M422, Q426, N532, 557–558 (SD), K580, D607, and 818–827 (TGRVLEHWHS). W894 lines the substrate pocket. Mo-bis(molybdopterin guanine dinucleotide) contacts are provided by N902 and K919.

It belongs to the prokaryotic molybdopterin-containing oxidoreductase family. NasA/NapA/NarB subfamily. As to quaternary structure, component of the periplasmic nitrate reductase NapAB complex composed of NapA and NapB. The cofactor is [4Fe-4S] cluster. Requires Mo-bis(molybdopterin guanine dinucleotide) as cofactor. In terms of processing, predicted to be exported by the Tat system. The position of the signal peptide cleavage has not been experimentally proven.

Its subcellular location is the periplasm. It carries out the reaction 2 Fe(II)-[cytochrome] + nitrate + 2 H(+) = 2 Fe(III)-[cytochrome] + nitrite + H2O. Functionally, catalytic subunit of the periplasmic nitrate reductase complex NapAB. Receives electrons from NapB and catalyzes the reduction of nitrate to nitrite. This is Periplasmic nitrate reductase from Wolinella succinogenes (strain ATCC 29543 / DSM 1740 / CCUG 13145 / JCM 31913 / LMG 7466 / NCTC 11488 / FDC 602W) (Vibrio succinogenes).